A 59-amino-acid chain; its full sequence is uncharacterized protein (59 aa).

A run of 2 helical transmembrane segments spans residues 1 to 21 and 30 to 50; these read MNMY…YIFI and GSWI…PYFY.

It is found in the cell membrane. This is an uncharacterized protein from Bacillus subtilis (strain 168).